A 52-amino-acid chain; its full sequence is Large ribosomal subunit protein bL33 (52 aa).

Belongs to the bacterial ribosomal protein bL33 family.

This Helicobacter acinonychis (strain Sheeba) protein is Large ribosomal subunit protein bL33.